The chain runs to 463 residues: MFKVARASQYLAITGGGIEDIKLSKKSWVFPWQRCTVFDVSPVNYTFKVQAMSAEKLPFVLPAVFTIGPRVDDTEALILYARLISPHDKQSNHVNELVEGVIEGETRVLAASMTMEEIFKGTKEFKKEVFDKVQLELDQFGLVIYNANVKQLVDVPGHEYFSYLGQKTQMEAANQARIDVAEAKMKGEIGAKERTGLTLQNAAKIDAESKIISMQRQGEGTKAEIKVKTEVKVFENQKEADVAKANSELAMKKAAWTKDAKVAEVEATKAVALREAELQTQVEKMNALTRTEKLKAEFLSKASVEYETKVQEANWELYNKQKQAEAVLYEKQKQAEAQKAEADATFYSKQKEAEGLVALASAQGTYLRTLLDAVQNDYSCLRDFLMINNGTYQEIAKTNALAVRDLQPKISVWNHGGEQGIGGASGSGMKDIAGLYKMLPPVLDTVYEQTGMQPPAWIGTLSK.

The S-palmitoyl cysteine moiety is linked to residue Cys35. Positions 305-354 (EYETKVQEANWELYNKQKQAEAVLYEKQKQAEAQKAEADATFYSKQKEAE) form a coiled coil.

The protein belongs to the band 7/mec-2 family. Flotillin subfamily. May be palmitoylated.

It is found in the cell membrane. Its subcellular location is the membrane. The protein resides in the caveola. In terms of biological role, may act as a scaffolding protein within caveolar membranes, functionally participating in formation of caveolae or caveolae-like vesicles. This Arabidopsis thaliana (Mouse-ear cress) protein is Flotillin-like protein 2 (FLOT2).